The primary structure comprises 344 residues: Chorismatase (344 aa).

Y155, R162, Y215, and R228 together coordinate substrate. Catalysis depends on E338, which acts as the Proton acceptor.

It belongs to the FkbO/Hyg5 family. In terms of assembly, monomer.

It carries out the reaction chorismate + H2O = (3R,4R)-3,4-dihydroxy-3,4-dihydrobenzoate + pyruvate. Its activity is regulated as follows. Competitively inhibited by 3-(2-carboxyethyl)benzoate. Its function is as follows. Involved in the biosynthesis of the macrocyclic amino acid-linked polyketides FK506 and FK520 which are potent immunosuppressants that prevent T-cell proliferation through initial binding to the immunophilin FKBP12. Catalyzes the hydrolysis of chorismate via a 1,4-conjugate elimination of water to yield (4R,5R)-4,5-dihydroxycyclohexa-1,5-dienecarboxylic acid (DCDC). In Streptomyces hygroscopicus, this protein is Chorismatase (fkbO).